Consider the following 243-residue polypeptide: MTPTANLLLPAPPFVPISDVRRLQLPPRVRHQPRPCWKGVEWGSIQTRMVSSFVAVGSRTRRRNVICASLFGVGAPEALVIGVVALLVFGPKGLAEVARNLGKTLRAFQPTIRELQDVSREFRSTLEREIGIDEVSQSTNYRPTTMNNNQQPAADPNVKPEPAPYTSEELMKVTEEQIAASAAAAWNPQQPATSQQQEEAPTTPRSEDAPTSGGSDGPAAPARAVSDSDPNQVNKSQKAEGER.

The N-terminal 67 residues, 1–67 (MTPTANLLLP…SRTRRRNVIC (67 aa)), are a transit peptide targeting the chloroplast. Residues 68-69 (AS) lie on the Lumenal side of the membrane. A helical transmembrane segment spans residues 70–90 (LFGVGAPEALVIGVVALLVFG). Residues 91–243 (PKGLAEVARN…NKSQKAEGER (153 aa)) lie on the Stromal side of the membrane. 2 disordered regions span residues 129–165 (EIGIDEVSQSTNYRPTTMNNNQQPAADPNVKPEPAPY) and 178–243 (IAAS…EGER). 2 stretches are compositionally biased toward polar residues: residues 135–152 (VSQSTNYRPTTMNNNQQP) and 187–204 (NPQQPATSQQQEEAPTTP).

This sequence belongs to the TatB family. In terms of assembly, in thylakoid membranes, TATC and TATB form a large receptor complex, containing about eight TATC-TATB pairs, which binds the precursor protein. Twin arginine signal peptide promotes pH-triggered docking of TATA oligomers to TATC-TATB receptor complex, inducing a conformational switch of TATA that results in activation of the translocase. TATA dissociates from TATC-TATB upon completion of translocation.

It is found in the plastid. Its subcellular location is the chloroplast thylakoid membrane. Its function is as follows. Part of the twin-arginine translocation (Tat) system that transports large folded proteins containing a characteristic twin-arginine motif in their signal peptide across the thylakoid membrane. Involved in delta pH-dependent protein transport required for chloroplast development, especially thylakoid membrane formation. TATC and TATB mediate precursor recognition, whereas TATA facilitates translocation. The polypeptide is Sec-independent protein translocase protein TATB, chloroplastic (Zea mays (Maize)).